A 562-amino-acid chain; its full sequence is Potassium voltage-gated channel subfamily V member 2 (562 aa).

Positions 1–10 are enriched in basic and acidic residues; the sequence is MLKQSNERRW. Positions 1–34 are disordered; sequence MLKQSNERRWSLSYKPWSTPETEDVPNTGSNQHR. Residues 1-163 lie on the Cytoplasmic side of the membrane; it reads MLKQSNERRW…TDEYFFDRDP (163 aa). A helical membrane pass occupies residues 164–184; the sequence is AVFQLIYNFYTSGVLLVRDEL. The Extracellular segment spans residues 185 to 269; sequence CPRSFLEELG…KPFSSVAAKA (85 aa). The chain crosses the membrane as a helical span at residues 270–290; sequence MGVATNLFVLISVVALALNTV. Residues 291 to 344 lie on the Cytoplasmic side of the membrane; it reads EEMQHQAEQGTGGGDPRPILEHVEMLCVAFFTLEFLLRLASTPNLQRFARSALN. The helical transmembrane segment at 345 to 365 threads the bilayer; it reads LVDLVAILPFYLQLLLECFTS. The Extracellular portion of the chain corresponds to 366–391; sequence EDQRHNKDSPREHDLETVGRVGKVGQ. The chain crosses the membrane as a helical; Voltage-sensor span at residues 392–412; it reads VLRIMRLMRIFRILKLARHST. At 413–427 the chain is on the cytoplasmic side; that stretch reads GLRAFGFTLRQCYQQ. The chain crosses the membrane as a helical span at residues 428-448; sequence VGCLMLFITMGIFSFSAAVYS. Topologically, residues 449 to 461 are extracellular; that stretch reads VEHDVPGTNFTSI. An N-linked (GlcNAc...) asparagine glycan is attached at Asn-457. Residues 462 to 482 constitute an intramembrane region (pore-forming); it reads LHAWWWAAVSISTVGYGDMYP. Residues 474–479 carry the Selectivity filter motif; that stretch reads TVGYGD. Residues 483 to 488 are Extracellular-facing; that stretch reads ETHLGR. A helical membrane pass occupies residues 489-509; sequence LFAFLCIAFGIILNGMPISIL. Residues 510-562 are Cytoplasmic-facing; that stretch reads YNKFSDYYSKLKAYEYTAIRRERGKVNFMQRATKKMAECLSESHAQSTTRQEN.

The protein belongs to the potassium channel family. V (TC 1.A.1.2) subfamily. Kv8.2/KCNV2 sub-subfamily. Heteromultimer with KCNB1, KCNC1 and KCNF1. Does not form homomultimers.

Its subcellular location is the cell membrane. Potassium channel subunit. Modulates channel activity by shifting the threshold and the half-maximal activation to more negative values. The protein is Potassium voltage-gated channel subfamily V member 2 (Kcnv2) of Mus musculus (Mouse).